Reading from the N-terminus, the 237-residue chain is LexA repressor (237 aa).

Positions 26–46 (FDEMKDALDLRSKSGIHRLIT) form a DNA-binding region, H-T-H motif. Residues Ser158 and Lys196 each act as for autocatalytic cleavage activity in the active site.

The protein belongs to the peptidase S24 family. As to quaternary structure, homodimer.

The enzyme catalyses Hydrolysis of Ala-|-Gly bond in repressor LexA.. Represses a number of genes involved in the response to DNA damage (SOS response), including recA and lexA. In the presence of single-stranded DNA, RecA interacts with LexA causing an autocatalytic cleavage which disrupts the DNA-binding part of LexA, leading to derepression of the SOS regulon and eventually DNA repair. The sequence is that of LexA repressor from Rhodopseudomonas palustris (strain BisB18).